The chain runs to 409 residues: Cuticle-degrading serine protease (409 aa).

An N-terminal signal peptide occupies residues 1-21 (MLTNGLISLLAIAGLATNAFA). Residues 22 to 123 (GPIRKVSNAG…VEQDTVVTTY (102 aa)) constitute a propeptide that is removed on maturation. The region spanning 39–122 (KYIVVLKKGL…YVEQDTVVTT (84 aa)) is the Inhibitor I9 domain. Residues 130–409 (TWGLDRISHE…PNKIAYNGYA (280 aa)) form the Peptidase S8 domain. The active-site Charge relay system is D164. N-linked (GlcNAc...) asparagine glycosylation is present at N178. The active-site Charge relay system is H200. N-linked (GlcNAc...) asparagine glycosylation occurs at N252. S353 serves as the catalytic Charge relay system.

It belongs to the peptidase S8 family.

The protein resides in the secreted. Its activity is regulated as follows. Inhibited by PMSF, SSI, the peptide Phe-Val and by Phe, but not by EDTA. Functionally, hydrolyzes gelatin, casein, the chromogenic substrate azocoll and the cuticle of the nematode P.redivivus. Immobilizes P.redivivus. The chain is Cuticle-degrading serine protease from Arthrobotrys oligospora (strain ATCC 24927 / CBS 115.81 / DSM 1491) (Nematode-trapping fungus).